Consider the following 121-residue polypeptide: Heimdall profilin (121 aa).

This sequence belongs to the Asgard profilin family.

The protein resides in the cytoplasm. It localises to the cytoskeleton. Binds to actin and affects the structure of the cytoskeleton. At high concentrations inhibits spontaneous rabbit actin nucleation. This strongly suggests this archaea has a profilin-regulated actin system, and actin-type genes can be identified in this organism. This Heimdallarchaeota archaeon (strain LC_2) protein is Heimdall profilin.